The primary structure comprises 346 residues: Melanoma-associated antigen B4 (346 aa).

Basic residues predominate over residues 1–18 (MPRGQKSKLRAREKRQRT). Residues 1–107 (MPRGQKSKLR…STSTERSLKD (107 aa)) form a disordered region. Residues 45-54 (VLRDTASSSL) show a composition bias toward polar residues. Residues 92-101 (ASSSQASTST) are compositionally biased toward low complexity. The MAGE domain maps to 109 to 307 (LTRKTKMLVQ…NNFPLLYEEA (199 aa)). Residues 311 to 346 (EEERAGARPRVAARRGTTAMTSAYSRATSSSSSQPM) form a disordered region. The segment covering 318-346 (RPRVAARRGTTAMTSAYSRATSSSSSQPM) has biased composition (low complexity).

As to expression, expressed in testis.

It localises to the cytoplasm. In Homo sapiens (Human), this protein is Melanoma-associated antigen B4 (MAGEB4).